A 544-amino-acid chain; its full sequence is Esterase-6 (544 aa).

The N-terminal stretch at 1–21 (MNYVGLGLIIVLSCLWLGSNA) is a signal peptide. Asn42 carries an N-linked (GlcNAc...) asparagine glycan. Cys86 and Cys105 are joined by a disulfide. Residue Ser209 is the Acyl-ester intermediate of the active site. Cys261 and Cys273 form a disulfide bridge. 2 N-linked (GlcNAc...) asparagine glycosylation sites follow: Asn420 and Asn456. Catalysis depends on His466, which acts as the Charge relay system. Asn506 carries N-linked (GlcNAc...) asparagine glycosylation. Cysteines 514 and 535 form a disulfide.

This sequence belongs to the type-B carboxylesterase/lipase family. As to quaternary structure, monomer. As to expression, specifically expressed in the ejaculatory bulbs of male.

It is found in the secreted. It catalyses the reaction a carboxylic ester + H2O = an alcohol + a carboxylate + H(+). In terms of biological role, transferred from the ejaculatory bulbs of males to the female genitals upon copulation, plays an important role in the reproductive biology. The polypeptide is Esterase-6 (Est-6) (Drosophila melanogaster (Fruit fly)).